We begin with the raw amino-acid sequence, 567 residues long: Delta(24)-sterol reductase (567 aa).

Over 1–24 (MSDLEAPLRPKRKKIWVDYFVKFR) the chain is Lumenal. A helical; Signal-anchor transmembrane segment spans residues 25-45 (WILVIFVVLPISFTLYFLTYL). Residues 45-231 (LGDVRSEWKS…VAAEVKLIPI (187 aa)) form the FAD-binding PCMH-type domain. Over 46-567 (GDVRSEWKSF…AYPEVDQPPD (522 aa)) the chain is Cytoplasmic. The interaction with calmodulin stretch occupies residues 520–541 (CRRKYGAVGTFMSVYYKCKKGR). Residues 548-567 (REAEQAHLDTAYPEVDQPPD) form a disordered region.

It belongs to the DIMINUTO family. Highly expressed in the apical region and root tips and lower levels in immature and mature internodes and leaves.

It is found in the membrane. It catalyses the reaction lathosterol + NADP(+) = 5alpha-cholesta-7,24-dien-3beta-ol + NADPH + H(+). In terms of biological role, plays a critical role in the general process of plant cell elongation. In Pisum sativum (Garden pea), this protein is Delta(24)-sterol reductase (DIM).